A 209-amino-acid polypeptide reads, in one-letter code: Putative 3-methyladenine DNA glycosylase (209 aa).

Residues 189-209 form a disordered region; sequence HVSTTRLGAPKKKRQKRLERR. Residues 197–209 are compositionally biased toward basic residues; it reads APKKKRQKRLERR.

It belongs to the DNA glycosylase MPG family.

The protein is Putative 3-methyladenine DNA glycosylase of Chlorobaculum parvum (strain DSM 263 / NCIMB 8327) (Chlorobium vibrioforme subsp. thiosulfatophilum).